Reading from the N-terminus, the 89-residue chain is Large ribosomal subunit protein eL43 (89 aa).

Positions 38, 41, 56, and 59 each coordinate Zn(2+). The C4-type zinc finger occupies 38-59 (CPVCHKRAVKRVGTGIWRCTKC).

Belongs to the eukaryotic ribosomal protein eL43 family. Putative zinc-binding subfamily. Part of the 50S ribosomal subunit. Zn(2+) serves as cofactor.

Binds to the 23S rRNA. The polypeptide is Large ribosomal subunit protein eL43 (Methanopyrus kandleri (strain AV19 / DSM 6324 / JCM 9639 / NBRC 100938)).